Here is a 273-residue protein sequence, read N- to C-terminus: Dermonecrotic toxin LsaSicTox-alphaIB1avi (273 aa).

His-5 is a catalytic residue. 2 residues coordinate Mg(2+): Glu-25 and Asp-27. The Nucleophile role is filled by His-41. 2 disulfide bridges follow: Cys-45/Cys-51 and Cys-47/Cys-190. Position 85 (Asp-85) interacts with Mg(2+).

It belongs to the arthropod phospholipase D family. Class II subfamily. Mg(2+) is required as a cofactor. In terms of tissue distribution, expressed by the venom gland.

It localises to the secreted. The catalysed reaction is an N-(acyl)-sphingosylphosphocholine = an N-(acyl)-sphingosyl-1,3-cyclic phosphate + choline. It carries out the reaction an N-(acyl)-sphingosylphosphoethanolamine = an N-(acyl)-sphingosyl-1,3-cyclic phosphate + ethanolamine. It catalyses the reaction a 1-acyl-sn-glycero-3-phosphocholine = a 1-acyl-sn-glycero-2,3-cyclic phosphate + choline. The enzyme catalyses a 1-acyl-sn-glycero-3-phosphoethanolamine = a 1-acyl-sn-glycero-2,3-cyclic phosphate + ethanolamine. Dermonecrotic toxins cleave the phosphodiester linkage between the phosphate and headgroup of certain phospholipids (sphingolipid and lysolipid substrates), forming an alcohol (often choline) and a cyclic phosphate. This toxin acts on sphingomyelin (SM). It may also act on ceramide phosphoethanolamine (CPE), lysophosphatidylcholine (LPC) and lysophosphatidylethanolamine (LPE), but not on lysophosphatidylserine (LPS), and lysophosphatidylglycerol (LPG). It acts by transphosphatidylation, releasing exclusively cyclic phosphate products as second products. Induces dermonecrosis, hemolysis, increased vascular permeability, edema, inflammatory response, and platelet aggregation. This Loxosceles sabina (Tucson recluse spider) protein is Dermonecrotic toxin LsaSicTox-alphaIB1avi.